A 129-amino-acid polypeptide reads, in one-letter code: Glycine cleavage system H protein (129 aa).

One can recognise a Lipoyl-binding domain in the interval 24–106; it reads TFTVGISEHA…YGDGWLFRIK (83 aa). Lys-65 is subject to N6-lipoyllysine.

The protein belongs to the GcvH family. As to quaternary structure, the glycine cleavage system is composed of four proteins: P, T, L and H. (R)-lipoate serves as cofactor.

Functionally, the glycine cleavage system catalyzes the degradation of glycine. The H protein shuttles the methylamine group of glycine from the P protein to the T protein. The protein is Glycine cleavage system H protein of Pseudoalteromonas atlantica (strain T6c / ATCC BAA-1087).